A 139-amino-acid polypeptide reads, in one-letter code: Large ribosomal subunit protein bL17 (139 aa).

Residues 117–139 (DRDPEAKGQDSGPVEIKDESEEG) are disordered.

This sequence belongs to the bacterial ribosomal protein bL17 family. As to quaternary structure, part of the 50S ribosomal subunit. Contacts protein L32.

The protein is Large ribosomal subunit protein bL17 of Rhodospirillum centenum (strain ATCC 51521 / SW).